A 655-amino-acid chain; its full sequence is RalA-binding protein 1 (655 aa).

The segment at 1–158 is disordered; the sequence is MTECFLPPTS…KKSKDLTAAD (158 aa). Thr-2 is modified (N-acetylthreonine). Residues 24–33 show a composition bias toward polar residues; the sequence is LTRTPSSEEI. A phosphoserine mark is found at Ser-29, Ser-30, and Ser-34. Phosphothreonine is present on Thr-44. Phosphoserine occurs at positions 48 and 62. The span at 52–68 shows a compositional bias: basic and acidic residues; sequence DILHEPPDVVSDDEKDH. Residue 69-74 coordinates ATP; that stretch reads GKKKGK. The segment covering 69-79 has biased composition (basic residues); it reads GKKKGKFKKKE. Residues Ser-92 and Ser-93 each carry the phosphoserine modification. The segment covering 102 to 118 has biased composition (basic residues); that stretch reads KMKRSKGIHVFKKPSFS. Positions 102 to 119 are nuclear localization signal; the sequence is KMKRSKGIHVFKKPSFSK. Over residues 119–155 the composition is skewed to basic and acidic residues; the sequence is KKKEKDFKIKEKPKEEKHKEEKHKEEKHKEKKSKDLT. A mediates association with membranes and could form transmembrane domains region spans residues 154-219; sequence LTAADVVKQW…PAVFRECIDY (66 aa). In terms of domain architecture, Rho-GAP spans 192–380; sequence IPLADAVERT…VVLKQVMKPL (189 aa). Positions 403 to 499 are mediates interaction with RALA and RALB; the sequence is RRQEFLLNCL…LTEQEELLAM (97 aa). ATP is bound at residue 418–425; it reads GGIKDLSK. Ser-461 and Ser-463 each carry phosphoserine. A mediates interaction with REPS1 and REPS2 region spans residues 500-655; sequence EQFLRRQIAS…PSRDRKETSI (156 aa). Disordered stretches follow at residues 525–551 and 601–655; these read QSRQQHGRSETEEYSSESESESEDEEE and AEQQ…ETSI. Residues 536–551 are compositionally biased toward acidic residues; it reads EEYSSESESESEDEEE. Residues 624–655 are compositionally biased toward basic and acidic residues; that stretch reads GVLEPKAAKEQPKAGKEPAKPSPSRDRKETSI. Ser-645 is modified (phosphoserine).

Interacts with the GTP-bound form of RALA (via effector domain); during mitosis, recruits RALBP1 to the mitochondrion where it promotes DNM1L phosphorylation and mitochondrial fission. Interacts with DNM1L; mediates its mitotic kinase cyclin B-CDK1-mediated phosphorylation during mitosis to promote mitochondrial fission. Interacts with the mitotic kinase cyclin B-CDK1 during mitosis. Interacts with the GTP-bound form of RALB (via effector domain). Interacts with REPS1; the interaction is direct and does not affect RALA-binding nor GTPase activator activity of RALBP1. Interacts with REPS2; the interaction is direct and does not affect RALA-binding nor GTPase activator activity of RALBP1. Interacts with EPN1, NUMB and TFAP2A during interphase and mitosis. Interacts with AP2M1; as part of the AP2 complex. Interacts with CDC42. Interacts with RAC1. Tyrosine-phosphorylated upon stimulation of cells with EGF. In terms of processing, may undergo proteolytic cleavage to give peptides which reassemble to form a transporter complex. As to expression, expressed ubiquitously but at low levels. Shows a strong expression in the erythrocytes.

It localises to the cell membrane. Its subcellular location is the cytoplasm. The protein resides in the cytosol. The protein localises to the cytoskeleton. It is found in the spindle pole. It localises to the nucleus. Its subcellular location is the mitochondrion. It carries out the reaction an S-substituted glutathione(in) + ATP + H2O = an S-substituted glutathione(out) + ADP + phosphate + H(+). It catalyses the reaction ATP + H2O + xenobioticSide 1 = ADP + phosphate + xenobioticSide 2.. The enzyme catalyses leukotriene C4(in) + ATP + H2O = leukotriene C4(out) + ADP + phosphate + H(+). Its function is as follows. Multifunctional protein that functions as a downstream effector of RALA and RALB. As a GTPase-activating protein/GAP can inactivate CDC42 and RAC1 by stimulating their GTPase activity. As part of the Ral signaling pathway, may also regulate ligand-dependent EGF and insulin receptors-mediated endocytosis. During mitosis, may act as a scaffold protein in the phosphorylation of EPSIN/EPN1 by the mitotic kinase cyclin B-CDK1, preventing endocytosis during that phase of the cell cycle. During mitosis, also controls mitochondrial fission as an effector of RALA. Recruited to mitochondrion by RALA, acts as a scaffold to foster the mitotic kinase cyclin B-CDK1-mediated phosphorylation and activation of DNM1L. Functionally, could also function as a primary ATP-dependent active transporter for glutathione conjugates of electrophiles. May also actively catalyze the efflux of a wide range of substrates including xenobiotics like doxorubicin (DOX) contributing to cell multidrug resistance. The protein is RalA-binding protein 1 of Homo sapiens (Human).